The chain runs to 111 residues: UPF0339 protein ACIAD0721 (111 aa).

2 repeat units span residues Ala10–Arg58 and Ala61–Leu109. Residues Ser89 to Gly111 are disordered.

This sequence belongs to the UPF0339 family. Duplicated subfamily.

This chain is UPF0339 protein ACIAD0721, found in Acinetobacter baylyi (strain ATCC 33305 / BD413 / ADP1).